The sequence spans 143 residues: Protein SLC31A2 (143 aa).

Over 1-22 (MAMHFIFSDTAVLLFDFWSVHS) the chain is Extracellular. A helical membrane pass occupies residues 23-43 (PAGMALSVLVLLLLAVLYEGI). The Cytoplasmic portion of the chain corresponds to 44-93 (KVGKAKLLNQVLVNLPTSISQQTIAETDGDSAGSDSFPVGRTHHRWYLCH). A Phosphoserine modification is found at serine 77. Residues 94-114 (FGQSLIHVIQVVIGYFIMLAV) traverse the membrane as a helical segment. At 115-119 (MSYNT) the chain is on the extracellular side. The chain crosses the membrane as a helical span at residues 120–140 (WIFLGVVLGSAVGYYLAYPLL). Topologically, residues 141 to 143 (STA) are cytoplasmic.

The protein belongs to the copper transporter (Ctr) (TC 1.A.56) family. SLC31A subfamily. In terms of assembly, oligomer. Interacts with SLC31A1; this interaction stabilizes SLC31A2 and protects it from ubiquitination and the subsequent degradation. In terms of processing, ubiquitinated; ubiquitination and the subsequent proteasomal degradation are prevent by SLC31A1 that stabilizes it. As to expression, ubiquitous with high expression in placenta and heart.

The protein localises to the membrane. Its subcellular location is the cytoplasmic vesicle membrane. It is found in the late endosome membrane. It localises to the lysosome membrane. Its function is as follows. Does not function as a copper(1+) importer in vivo. However, in vitro functions as a low-affinity copper(1+) importer. Regulator of SLC31A1 which facilitates the cleavage of the SLC31A1 ecto-domain or which stabilizes the truncated form of SLC31A1 (Truncated CTR1 form), thereby drives the SLC31A1 truncated form-dependent endosomal copper export and modulates the copper and cisplatin accumulation via SLC31A1. This chain is Protein SLC31A2, found in Homo sapiens (Human).